We begin with the raw amino-acid sequence, 344 residues long: 2,3,4,5-tetrahydropyridine-2,6-dicarboxylate N-succinyltransferase (344 aa).

Mg(2+) is bound at residue Glu205. Glu221 (acyl-anhydride intermediate) is an active-site residue. Residues Arg223, Gly238, Ser241, Ala264, 279–280 (EA), Gly287, Lys304, and 317–320 (RRNS) contribute to the succinyl-CoA site.

This sequence belongs to the type 2 tetrahydrodipicolinate N-succinyltransferase family. In terms of assembly, homotrimer.

The protein localises to the cytoplasm. The catalysed reaction is (S)-2,3,4,5-tetrahydrodipicolinate + succinyl-CoA + H2O = (S)-2-succinylamino-6-oxoheptanedioate + CoA. It functions in the pathway amino-acid biosynthesis; L-lysine biosynthesis via DAP pathway; LL-2,6-diaminopimelate from (S)-tetrahydrodipicolinate (succinylase route): step 1/3. In terms of biological role, catalyzes the conversion of the cyclic tetrahydrodipicolinate (THDP) into the acyclic N-succinyl-L-2-amino-6-oxopimelate using succinyl-CoA. In Pseudomonas paraeruginosa (strain DSM 24068 / PA7) (Pseudomonas aeruginosa (strain PA7)), this protein is 2,3,4,5-tetrahydropyridine-2,6-dicarboxylate N-succinyltransferase.